The primary structure comprises 77 residues: Acyl carrier protein (77 aa).

The Carrier domain maps to S4–N77. At S40 the chain carries O-(pantetheine 4'-phosphoryl)serine.

This sequence belongs to the acyl carrier protein (ACP) family. Post-translationally, 4'-phosphopantetheine is transferred from CoA to a specific serine of apo-ACP by AcpS. This modification is essential for activity because fatty acids are bound in thioester linkage to the sulfhydryl of the prosthetic group.

The protein localises to the cytoplasm. It participates in lipid metabolism; fatty acid biosynthesis. In terms of biological role, carrier of the growing fatty acid chain in fatty acid biosynthesis. The chain is Acyl carrier protein from Anabaena variabilis.